The sequence spans 235 residues: Large ribosomal subunit protein uL1 (235 aa).

This sequence belongs to the universal ribosomal protein uL1 family. In terms of assembly, part of the 50S ribosomal subunit.

Binds directly to 23S rRNA. The L1 stalk is quite mobile in the ribosome, and is involved in E site tRNA release. In terms of biological role, protein L1 is also a translational repressor protein, it controls the translation of the L11 operon by binding to its mRNA. The polypeptide is Large ribosomal subunit protein uL1 (Synechococcus sp. (strain WH7803)).